Consider the following 145-residue polypeptide: Neuromedin-S (145 aa).

Positions 1–25 are cleaved as a signal peptide; sequence MKYLAQFPSILAIYCFCLLQIPSSG. 3 consecutive propeptides follow at residues 26 to 64, 65 to 100, and 101 to 103; these read FPRP…IYKR, FLFH…ADRR, and MKT. Position 136 is an asparagine amide (Asn-136). Residues 139–145 constitute a propeptide that is removed on maturation; sequence NLDFDTW.

The protein belongs to the NmU family.

It localises to the secreted. Implicated in the regulation of circadian rhythms through autocrine and/or paracrine actions. This is Neuromedin-S (NMS) from Bos taurus (Bovine).